The sequence spans 717 residues: Probable cyclic nucleotide-gated ion channel 5 (717 aa).

The Cytoplasmic segment spans residues 1–102 (MAGKRENFVR…DKFLLYCNKL (102 aa)). The chain crosses the membrane as a helical span at residues 103-123 (FVASCILSVFVDPFFFYLPVI). At 124–136 (NAESKCLGIDRKL) the chain is on the extracellular side. A helical membrane pass occupies residues 137 to 157 (AITASTLRTFIDVFYLAHMAL). Over 158–190 (QLRTAYIAPSSRVFGRGELVIDPAQIAKRYLQR) the chain is Cytoplasmic. Residues 191 to 211 (WFIIDFLSVLPLPQIVVWRFL) traverse the membrane as a helical segment. Residues 212–224 (QSSNGSDVLATKQ) lie on the Extracellular side of the membrane. The chain crosses the membrane as a helical span at residues 225–245 (ALLFIVLVQYIPRFLRVLPLT). Residues 246–265 (SELKRTAGVFAETAWAGAAY) lie on the Cytoplasmic side of the membrane. The helical transmembrane segment at 266-286 (YLLLYMLASHIVGAFWYLLAL) threads the bilayer. Residues 287–391 (ERNDACWQEA…GQGLETSTYP (105 aa)) lie on the Extracellular side of the membrane. A helical membrane pass occupies residues 392 to 412 (MEIIFSISLAISGLILFALLI). The Cytoplasmic portion of the chain corresponds to 413–717 (GNMQTYLQSL…KPPEPDFTAD (305 aa)). A nucleoside 3',5'-cyclic phosphate is bound by residues 498–628 (LFKS…TFRF) and glutamate 569. The interval 614 to 629 (FRRLHSRQVQHTFRFY) is calmodulin-binding. Positions 634–663 (RTWAACFIQAAWRRYCKRKKMEEAEAEAAA) constitute an IQ domain.

The protein belongs to the cyclic nucleotide-gated cation channel (TC 1.A.1.5) family. As to quaternary structure, homotetramer or heterotetramer.

Its subcellular location is the cell membrane. Functionally, probable cyclic nucleotide-gated ion channel. This is Probable cyclic nucleotide-gated ion channel 5 (CNGC5) from Arabidopsis thaliana (Mouse-ear cress).